The sequence spans 185 residues: ATP-dependent protease subunit HslV (185 aa).

The active site involves T12. Na(+) is bound by residues A168, C171, and T174.

The protein belongs to the peptidase T1B family. HslV subfamily. A double ring-shaped homohexamer of HslV is capped on each side by a ring-shaped HslU homohexamer. The assembly of the HslU/HslV complex is dependent on binding of ATP.

The protein localises to the cytoplasm. It carries out the reaction ATP-dependent cleavage of peptide bonds with broad specificity.. Its activity is regulated as follows. Allosterically activated by HslU binding. In terms of biological role, protease subunit of a proteasome-like degradation complex believed to be a general protein degrading machinery. The sequence is that of ATP-dependent protease subunit HslV from Cereibacter sphaeroides (strain KD131 / KCTC 12085) (Rhodobacter sphaeroides).